The primary structure comprises 214 residues: Ceramide-1-phosphate transfer protein (214 aa).

Residues Asp-56, Lys-60, Arg-106, Arg-110, and His-150 each coordinate an N-acylsphingoid base 1-phosphate.

Belongs to the GLTP family. In terms of tissue distribution, ubiquitous. Detected in heart, brain, placenta, lung, liver, skeletal muscle, kidney, pancreas, spleen, thymus, prostate, testis, ovary, small intestine, colon and peripheral blood leukocytes.

It localises to the cytoplasm. Its subcellular location is the cytosol. The protein localises to the golgi apparatus. The protein resides in the trans-Golgi network membrane. It is found in the cell membrane. It localises to the endosome membrane. Its subcellular location is the nucleus outer membrane. It catalyses the reaction N-(hexadecanoyl)-sphing-4-enine-1-phosphate(in) = N-(hexadecanoyl)-sphing-4-enine-1-phosphate(out). The catalysed reaction is N-(9Z-octadecenoyl)-sphing-4-enine-1-phosphate(in) = N-(9Z-octadecenoyl)-sphing-4-enine-1-phosphate(out). Mediates the intracellular transfer of ceramide-1-phosphate (C1P) between organelle membranes and the cell membrane. Required for normal structure of the Golgi stacks. Can bind phosphoceramides with a variety of aliphatic chains, but has a preference for lipids with saturated C16:0 or monounsaturated C18:1 aliphatic chains, and is inefficient with phosphoceramides containing lignoceryl (C24:0). Plays a role in the regulation of the cellular levels of ceramide-1-phosphate, and thereby contributes to the regulation of phospholipase PLA2G4A activity and the release of arachidonic acid. Has no activity with galactosylceramide, lactosylceramide, sphingomyelin, phosphatidylcholine, phosphatidic acid and ceramide. C1P transfer is stimulated by phosphatidylserine in C1P source vesicles. Regulates autophagy, inflammasome mediated IL1B and IL18 processing, and pyroptosis, but not apoptosis. The polypeptide is Ceramide-1-phosphate transfer protein (Homo sapiens (Human)).